A 315-amino-acid chain; its full sequence is Protoheme IX farnesyltransferase (315 aa).

The next 9 helical transmembrane spans lie at 38–58, 62–82, 111–131, 132–152, 159–179, 184–204, 233–253, 255–275, and 293–313; these read IIELLLITTVPVMFLAEQGVP, LVLLTCVGGYLSAGGANALNM, LVFGITLAIVSTLLFGFTVNW, LSAWLSLGALLFYVVVYTMIL, NIVWGGIAGCLPVLIGWSAVT, WAPVILFGVMFFWTPPHYWPL, IVIYSWVMVVVSLLLQPLGYT, WFYTAVALAAGGMWLWEAHGL, and LFHWSITYVSVLFLAIAVDPF.

It belongs to the UbiA prenyltransferase family. Protoheme IX farnesyltransferase subfamily.

The protein localises to the cell membrane. The catalysed reaction is heme b + (2E,6E)-farnesyl diphosphate + H2O = Fe(II)-heme o + diphosphate. It functions in the pathway porphyrin-containing compound metabolism; heme O biosynthesis; heme O from protoheme: step 1/1. In terms of biological role, converts heme B (protoheme IX) to heme O by substitution of the vinyl group on carbon 2 of heme B porphyrin ring with a hydroxyethyl farnesyl side group. The polypeptide is Protoheme IX farnesyltransferase (Streptomyces coelicolor (strain ATCC BAA-471 / A3(2) / M145)).